We begin with the raw amino-acid sequence, 312 residues long: Ornithine carbamoyltransferase (312 aa).

Carbamoyl phosphate-binding positions include 57 to 60, glutamine 84, arginine 108, and 135 to 138; these read STRT and HPCQ. Residues asparagine 166, aspartate 226, and 230 to 231 contribute to the L-ornithine site; that span reads SM. Residues 265-266 and arginine 293 contribute to the carbamoyl phosphate site; that span reads CL.

This sequence belongs to the aspartate/ornithine carbamoyltransferase superfamily. OTCase family.

The protein resides in the cytoplasm. The catalysed reaction is carbamoyl phosphate + L-ornithine = L-citrulline + phosphate + H(+). It functions in the pathway amino-acid degradation; L-arginine degradation via ADI pathway; carbamoyl phosphate from L-arginine: step 2/2. In terms of biological role, reversibly catalyzes the transfer of the carbamoyl group from carbamoyl phosphate (CP) to the N(epsilon) atom of ornithine (ORN) to produce L-citrulline. The protein is Ornithine carbamoyltransferase of Brucella abortus (strain 2308).